Here is a 529-residue protein sequence, read N- to C-terminus: Neuronal acetylcholine receptor subunit alpha-2 (529 aa).

A signal peptide spans 1–26; sequence MGPSCPVFLSFTKLSLWWLLLTPAGG. Positions 27–56 are disordered; that stretch reads EEAKRPPPRAPGDPLSSPSPTALPQGGSHT. Residues 27–264 lie on the Extracellular side of the membrane; it reads EEAKRPPPRA…VTYAFVIRRL (238 aa). N-linked (GlcNAc...) asparagine glycans are attached at residues Asn79 and Asn129. The cysteines at positions 183 and 197 are disulfide-linked. A glycan (N-linked (GlcNAc...) asparagine) is linked at Asn235. Cys247 and Cys248 are oxidised to a cystine. 3 helical membrane-spanning segments follow: residues 265 to 289, 297 to 315, and 331 to 352; these read PLFY…VFYL, ITLC…LLIT, and YLLF…VLNV. At 353–502 the chain is on the cytoplasmic side; the sequence is HHRSPSTHTM…WKYVAMVIDR (150 aa). Residues 503 to 521 form a helical membrane-spanning segment; sequence IFLWLFIIVCFLGTIGLFL.

It belongs to the ligand-gated ion channel (TC 1.A.9) family. Acetylcholine receptor (TC 1.A.9.1) subfamily. Alpha-2/CHRNA2 sub-subfamily. Neuronal AChR is composed of two different types of subunits: alpha and non-alpha (beta). CHRNA2/alpha-2 subunit can be combined to CHRNB2/beta-2 or CHRNB4/beta-4 to give rise to functional receptors. Both CHRNA2:CHRNB2 and CHRNA2:CHRNB4 nAChR complexes are heteropentamers with two subtypes: LS (low agonist sensitivity) with a (CHRNA2)3:(CHRNB2/4)2 and HS (high agonist sensitivity) with a (CHRNA2)2:(CHRNB2/4)3 stoichiometries; the subtypes differ in their subunit binding interfaces which are involved in ligand binding.

The protein localises to the synaptic cell membrane. It is found in the cell membrane. The catalysed reaction is Ca(2+)(in) = Ca(2+)(out). The enzyme catalyses K(+)(in) = K(+)(out). It catalyses the reaction Na(+)(in) = Na(+)(out). Component of neuronal acetylcholine receptors (nAChRs) that function as pentameric, ligand-gated cation channels with high calcium permeability among other activities. nAChRs are excitatory neurotrasnmitter receptors formed by a collection of nAChR subunits known to mediate synaptic transmission in the nervous system and the neuromuscular junction. Each nAchR subunit confers differential attributes to channel properties, including activation, deactivation and desensitization kinetics, pH sensitivity, cation permeability, and binding to allosteric modulators. CHRNA2 forms heteropentameric neuronal acetylcholine receptors with CHRNB2 and CHRNB4 and plays a role in nicotine dependence. This is Neuronal acetylcholine receptor subunit alpha-2 from Homo sapiens (Human).